The primary structure comprises 195 residues: GTP-dependent dephospho-CoA kinase (195 aa).

5 residues coordinate GTP: Asp49, Val50, Asp68, Glu127, and Asp150.

It belongs to the GTP-dependent DPCK family.

It catalyses the reaction 3'-dephospho-CoA + GTP = GDP + CoA + H(+). The protein operates within cofactor biosynthesis; coenzyme A biosynthesis. Functionally, catalyzes the GTP-dependent phosphorylation of the 3'-hydroxyl group of dephosphocoenzyme A to form coenzyme A (CoA). This chain is GTP-dependent dephospho-CoA kinase, found in Methanosarcina acetivorans (strain ATCC 35395 / DSM 2834 / JCM 12185 / C2A).